A 294-amino-acid polypeptide reads, in one-letter code: Filamin-B (294 aa).

Filamin repeat units follow at residues 1–67 (GTRL…KVRV) and 71–163 (GQAG…KAKV). Phosphoserine occurs at positions 61 and 157. Lysine 160 participates in a covalent cross-link: Glycyl lysine isopeptide (Lys-Gly) (interchain with G-Cter in ISG15). Residues 164–198 (TGQRLVGPGSTNETSSILVESVTRSSTETCYSAIP) are hinge 2. The segment at 164 to 294 (TGQRLVGPGS…PGSPFHVTVP (131 aa)) is self-association site, tail. Serine 173 and serine 184 each carry phosphoserine. One copy of the Filamin 24 repeat lies at 199-293 (KASSDASKVT…IPGSPFHVTV (95 aa)). N6-succinyllysine occurs at positions 210 and 216. Position 268 is an N6-acetyllysine (lysine 268).

Belongs to the filamin family. As to quaternary structure, homodimer. Interacts with FLNA, FLNC, INPPL1, ITGB1A, ITGB1D, ITGB3, ITGB6, MYOT, MYOZ1, PSEN1 and PSEN2. Interacts with MICALL2. Interacts with RFLNA and RFLNB. Interacts with HTLV-I viral p13 protein. Interacts with ASB2; the interaction targets FLNB for proteasomal degradation. ISGylation prevents ability to interact with the upstream activators of the JNK cascade and inhibits IFNA-induced JNK signaling. Post-translationally, ubiquitination by a SCF-like complex containing ASB2 leads to proteasomal degradation which promotes muscle differentiation.

Its subcellular location is the cytoplasm. It localises to the cell cortex. It is found in the cytoskeleton. The protein localises to the myofibril. The protein resides in the sarcomere. Its subcellular location is the z line. In terms of biological role, connects cell membrane constituents to the actin cytoskeleton. May promote orthogonal branching of actin filaments and links actin filaments to membrane glycoproteins. Anchors various transmembrane proteins to the actin cytoskeleton. The chain is Filamin-B (FLNB) from Oryctolagus cuniculus (Rabbit).